The sequence spans 854 residues: Rod cGMP-specific 3',5'-cyclic phosphodiesterase subunit beta (854 aa).

N-acetylserine is present on Ser-2. GAF domains are found at residues 71 to 220 (NMER…TLYL) and 252 to 429 (DIER…GWSV). Residues 481-814 (DEDELGEILK…KEWKALADEY (334 aa)) enclose the PDEase domain. His-557 (proton donor) is an active-site residue. His-561, His-597, Asp-598, and Asp-718 together coordinate a divalent metal cation. A lipid anchor (S-geranylgeranyl cysteine) is attached at Cys-851. A propeptide spans 852-854 (CIL) (removed in mature form).

It belongs to the cyclic nucleotide phosphodiesterase family. Oligomer composed of two catalytic chains (alpha and beta), an inhibitory chain (gamma) and the delta chain. A divalent metal cation serves as cofactor.

Its subcellular location is the membrane. It is found in the cell projection. The protein resides in the cilium. It localises to the photoreceptor outer segment. It catalyses the reaction 3',5'-cyclic GMP + H2O = GMP + H(+). Rod-specific cGMP phosphodiesterase that catalyzes the hydrolysis of 3',5'-cyclic GMP. Necessary for the formation of a functional phosphodiesterase holoenzyme. Involved in retinal circadian rhythm photoentrainment via modulation of UVA and orange light-induced phase-shift of the retina clock. May participate in processes of transmission and amplification of the visual signal. In Homo sapiens (Human), this protein is Rod cGMP-specific 3',5'-cyclic phosphodiesterase subunit beta.